A 339-amino-acid polypeptide reads, in one-letter code: Senescence-specific cysteine protease SAG39 (339 aa).

An N-terminal signal peptide occupies residues 1 to 23; the sequence is MAMAKALLFAILGCLCLCSAVLA. 3 disulfide bridges follow: C144-C187, C178-C220, and C276-C328. The active site involves C147. Active-site residues include H282 and N303.

It belongs to the peptidase C1 family.

It is found in the vacuole. In terms of biological role, cysteine protease that may have a developmental senescence specific cell death function during apoptosis, heavy metal detoxification, and hypersensitive response. The protein is Senescence-specific cysteine protease SAG39 of Oryza sativa subsp. indica (Rice).